The primary structure comprises 137 residues: Small ribosomal subunit protein bS16m (137 aa).

The transit peptide at 1–34 (MVHLTTLLCKAYRGGHLTIRLALGGCTNRPFYRI) directs the protein to the mitochondrion. Position 130 is a phosphothreonine (Thr130).

This sequence belongs to the bacterial ribosomal protein bS16 family. In terms of assembly, component of the mitochondrial ribosome small subunit (28S) which comprises a 12S rRNA and about 30 distinct proteins.

The protein resides in the mitochondrion. The chain is Small ribosomal subunit protein bS16m (MRPS16) from Pongo abelii (Sumatran orangutan).